The primary structure comprises 432 residues: Glutamate-1-semialdehyde 2,1-aminomutase (432 aa).

The residue at position 272 (K272) is an N6-(pyridoxal phosphate)lysine.

Belongs to the class-III pyridoxal-phosphate-dependent aminotransferase family. HemL subfamily. As to quaternary structure, homodimer. Requires pyridoxal 5'-phosphate as cofactor.

It is found in the cytoplasm. The enzyme catalyses (S)-4-amino-5-oxopentanoate = 5-aminolevulinate. Its pathway is porphyrin-containing compound metabolism; protoporphyrin-IX biosynthesis; 5-aminolevulinate from L-glutamyl-tRNA(Glu): step 2/2. It functions in the pathway porphyrin-containing compound metabolism; chlorophyll biosynthesis. This chain is Glutamate-1-semialdehyde 2,1-aminomutase, found in Nostoc punctiforme (strain ATCC 29133 / PCC 73102).